Here is a 613-residue protein sequence, read N- to C-terminus: Zinc finger CCCH domain-containing protein 59 (613 aa).

Positions 275 to 296 (NTTLSPYISPAKSVPVEETPKR) are disordered. C3H1-type zinc fingers lie at residues 318–346 (AGGNRLCFKFTSSGSCPRGSKCNYRHDEE) and 350–378 (HYNRNVCFDFLNKGKCEKGPECRFAHSLS).

In Oryza sativa subsp. japonica (Rice), this protein is Zinc finger CCCH domain-containing protein 59.